We begin with the raw amino-acid sequence, 460 residues long: Phosphoglucomutase (460 aa).

The active-site Phosphoserine intermediate is Ser103. Ser103 is a binding site for Mg(2+). Residues 103–104 (SH) and Lys113 each bind substrate. Residues Asp239, Asp241, and Asp243 each coordinate Mg(2+). Substrate is bound by residues 243-244 (DR), Thr303, and 322-324 (EMS).

This sequence belongs to the phosphohexose mutase family. The cofactor is Mg(2+).

The protein localises to the cytoplasm. It catalyses the reaction alpha-D-glucose 1-phosphate = alpha-D-glucose 6-phosphate. In terms of biological role, this enzyme participates in both the breakdown and synthesis of glucose. The protein is Phosphoglucomutase (pgm) of Neisseria meningitidis serogroup A / serotype 4A (strain DSM 15465 / Z2491).